A 361-amino-acid polypeptide reads, in one-letter code: Putative agmatine deiminase (361 aa).

Cys354 functions as the Amidino-cysteine intermediate in the catalytic mechanism.

It belongs to the agmatine deiminase family.

It catalyses the reaction agmatine + H2O = N-carbamoylputrescine + NH4(+). This chain is Putative agmatine deiminase, found in Streptococcus pneumoniae (strain ATCC BAA-255 / R6).